A 355-amino-acid chain; its full sequence is UDP-N-acetylglucosamine--N-acetylmuramyl-(pentapeptide) pyrophosphoryl-undecaprenol N-acetylglucosamine transferase (355 aa).

UDP-N-acetyl-alpha-D-glucosamine contacts are provided by residues 15-17 (TGG), asparagine 127, arginine 163, serine 191, isoleucine 244, 263-268 (ALTVSE), and glutamine 288.

This sequence belongs to the glycosyltransferase 28 family. MurG subfamily.

It is found in the cell inner membrane. The enzyme catalyses di-trans,octa-cis-undecaprenyl diphospho-N-acetyl-alpha-D-muramoyl-L-alanyl-D-glutamyl-meso-2,6-diaminopimeloyl-D-alanyl-D-alanine + UDP-N-acetyl-alpha-D-glucosamine = di-trans,octa-cis-undecaprenyl diphospho-[N-acetyl-alpha-D-glucosaminyl-(1-&gt;4)]-N-acetyl-alpha-D-muramoyl-L-alanyl-D-glutamyl-meso-2,6-diaminopimeloyl-D-alanyl-D-alanine + UDP + H(+). It functions in the pathway cell wall biogenesis; peptidoglycan biosynthesis. Cell wall formation. Catalyzes the transfer of a GlcNAc subunit on undecaprenyl-pyrophosphoryl-MurNAc-pentapeptide (lipid intermediate I) to form undecaprenyl-pyrophosphoryl-MurNAc-(pentapeptide)GlcNAc (lipid intermediate II). In Salmonella newport (strain SL254), this protein is UDP-N-acetylglucosamine--N-acetylmuramyl-(pentapeptide) pyrophosphoryl-undecaprenol N-acetylglucosamine transferase.